The sequence spans 35 residues: Beta-amanitin proprotein (35 aa).

Positions 1–10 are excised as a propeptide; it reads MSDINATRLP. Positions 11–18 form a cross-link, cyclopeptide (Ile-Pro); sequence IWGIGCDP. Positions 12 to 16 form a cross-link, 2'-cysteinyl-6'-hydroxytryptophan sulfoxide (Trp-Cys); it reads WGIGC. Residues 19 to 35 constitute a propeptide that is removed on maturation; it reads CVGDDVTALLTRGEALC.

The protein belongs to the MSDIN fungal toxin family. Processed by the macrocyclase-peptidase enzyme POPB to yield a toxic cyclic octapeptide. POPB first removes 10 residues from the N-terminus. Conformational trapping of the remaining peptide forces the enzyme to release this intermediate rather than proceed to macrocyclization. The enzyme rebinds the remaining peptide in a different conformation and catalyzes macrocyclization of the N-terminal 8 residues. Expressed in basidiocarps.

Its function is as follows. Toxin belonging to the bicyclic octapeptides amatoxins that acts by binding non-competitively to RNA polymerase II and greatly slowing the elongation of transcripts from target promoters. This is Beta-amanitin proprotein from Amanita exitialis (Guangzhou destroying angel).